The sequence spans 396 residues: GTPase Obg (396 aa).

The Obg domain maps to 1–159; it reads MKFVDEASIY…RTLKLEMKVL (159 aa). The segment at 120 to 146 is disordered; it reads GGHHGLGNTRFKSSTNRAPRQTTKGTV. Polar residues predominate over residues 129–144; sequence RFKSSTNRAPRQTTKG. Positions 160–333 constitute an OBG-type G domain; sequence ADVGLLGLPN…LCLDLMTALD (174 aa). GTP is bound by residues 166–173, 191–195, 213–216, 283–286, and 314–316; these read GLPNAGKS, FTTLV, DIPG, NKTD, and SAI. 2 residues coordinate Mg(2+): Ser-173 and Thr-193.

The protein belongs to the TRAFAC class OBG-HflX-like GTPase superfamily. OBG GTPase family. Monomer. Mg(2+) serves as cofactor.

The protein localises to the cytoplasm. Functionally, an essential GTPase which binds GTP, GDP and possibly (p)ppGpp with moderate affinity, with high nucleotide exchange rates and a fairly low GTP hydrolysis rate. Plays a role in control of the cell cycle, stress response, ribosome biogenesis and in those bacteria that undergo differentiation, in morphogenesis control. The sequence is that of GTPase Obg from Marinomonas sp. (strain MWYL1).